Here is a 110-residue protein sequence, read N- to C-terminus: V-type proton ATPase subunit G1 (110 aa).

N-acetylmethionine is present on M1. Residues K60–D80 are disordered.

Belongs to the V-ATPase G subunit family. As to quaternary structure, V-ATPase is a heteromultimeric enzyme composed of a peripheral catalytic V1 complex (components A to H) attached to an integral membrane V0 proton pore complex (components: a, c, c'', d and e).

It localises to the cell membrane. It is found in the vacuole membrane. In terms of biological role, catalytic subunit of the peripheral V1 complex of vacuolar ATPase (V-ATPase). V-ATPase is responsible for acidifying a variety of intracellular compartments in eukaryotic cells. This is V-type proton ATPase subunit G1 (VHA-G1) from Arabidopsis thaliana (Mouse-ear cress).